The sequence spans 244 residues: Cysteine-rich secretory protein 1 (244 aa).

The first 19 residues, 1–19, serve as a signal peptide directing secretion; the sequence is MALMLVLFFLAAVLPPSLL. In terms of domain architecture, SCP spans 44–170; that stretch reads SKHNQLRRMV…PLRYYYVCHY (127 aa). A glycan (N-linked (GlcNAc...) asparagine) is linked at Asn145. Disulfide bonds link Cys190–Cys197, Cys193–Cys202, Cys206–Cys239, Cys215–Cys233, and Cys224–Cys237. One can recognise a ShKT domain in the interval 206-239; sequence CGHEDKYTNCKYLKKMLSCEHELLKKGCKATCLC.

It belongs to the CRISP family. In terms of tissue distribution, mainly found in the cauda epididymis where it is synthesized by the principal cells and secreted into the lumen. Binds to the heads of spermatozoa. Also expressed in the submandibular gland.

The protein resides in the cytoplasmic vesicle. The protein localises to the secretory vesicle. In terms of biological role, this protein is supposed to help spermatozoa undergo functional maturation while they move from the testis to the ductus deferens. This chain is Cysteine-rich secretory protein 1 (Crisp1), found in Mus musculus (Mouse).